The following is a 338-amino-acid chain: Histidinol-phosphate aminotransferase (338 aa).

Lys-204 is subject to N6-(pyridoxal phosphate)lysine.

It belongs to the class-II pyridoxal-phosphate-dependent aminotransferase family. Histidinol-phosphate aminotransferase subfamily. Pyridoxal 5'-phosphate is required as a cofactor.

The catalysed reaction is L-histidinol phosphate + 2-oxoglutarate = 3-(imidazol-4-yl)-2-oxopropyl phosphate + L-glutamate. It participates in amino-acid biosynthesis; L-histidine biosynthesis; L-histidine from 5-phospho-alpha-D-ribose 1-diphosphate: step 7/9. This Pyrococcus furiosus (strain ATCC 43587 / DSM 3638 / JCM 8422 / Vc1) protein is Histidinol-phosphate aminotransferase.